The following is a 258-amino-acid chain: MVLIRVLANLLILQLSYAQKSSELVVGGDECNINEHHSLVAIFNSTGFFCSGTLINQEWVVTAAHCDSKNFKMKFGAHSKKLLNEDEQIRNPKEKFICPNKKSNEILDKDIMLIKLDSPVSNSAHIAPLSLPSSPPSVGSVCRIMGWGSTTPIEVTYPDVPYCANINLLDDAECKPGYPELLPEYRTLCAGIVQGGKDTCGGDSGGPLICNEKLHGIVSYGGHPCGQSHKPGIYTNVFDYNDWIQSIIAGNTDATCLS.

Residues M1–A18 form the signal peptide. The propeptide occupies Q19–L24. The 225-residue stretch at V25–A249 folds into the Peptidase S1 domain. Cystine bridges form between C31–C163, C50–C66, C98–C256, C142–C210, C174–C189, and C200–C225. N-linked (GlcNAc...) asparagine glycosylation is present at N44. Residues H65 and D110 each act as charge relay system in the active site. Residue S204 is the Charge relay system of the active site.

The protein belongs to the peptidase S1 family. Snake venom subfamily. In terms of assembly, monomer. Expressed by the venom gland.

It is found in the secreted. Its function is as follows. The recombinant protein has fibrinogenolytic activity against the Aalpha chain (FGA) of fibrinogen. Activates plasminogen (PLG) (is 4-fold less active than urokinase). Has weak thrombin-like enzyme activity. Has enzymatic activity against a trypsin-like substrate (S-3013) and shows a weaker activity on an activated protein C substrate (S-3125). The sequence is that of Alpha-fibrinogenase albofibrase from Trimeresurus albolabris (White-lipped pit viper).